The chain runs to 94 residues: MRIKPLGDRVVIKRLEAEEKTKSGIVLPGSAKEKPQEAEIVAVGPGGLVDGKEVNMEVKVGDRVLFSQYAGNEVKIDGEEYIILRQNDILAIVE.

This sequence belongs to the GroES chaperonin family. In terms of assembly, heptamer of 7 subunits arranged in a ring. Interacts with the chaperonin GroEL.

The protein resides in the cytoplasm. Functionally, together with the chaperonin GroEL, plays an essential role in assisting protein folding. The GroEL-GroES system forms a nano-cage that allows encapsulation of the non-native substrate proteins and provides a physical environment optimized to promote and accelerate protein folding. GroES binds to the apical surface of the GroEL ring, thereby capping the opening of the GroEL channel. The sequence is that of Co-chaperonin GroES from Clostridium botulinum.